Consider the following 858-residue polypeptide: Polyhomeotic-like protein 2 (858 aa).

Disordered regions lie at residues 1-76 (MENE…QYLQ), 230-307 (QQTP…MEGR), 337-388 (PQPS…VALQ), 407-444 (LQCPTANLHKPGGSQQCHPPTPDTGPQNGHPEGVPHTP), 473-493 (KEVAPGEKSVPETRSGPSPHQ), and 529-561 (TDLSSPGMTSGNGNSASSIAGTAPQNGENKPPQ). Low complexity-rich tracts occupy residues 10 to 34 (TSSSACATSSTSGASSSSGCNNSSS) and 230 to 241 (QQTPAAAASGPT). Residues 33–53 (SSGGSGRPTGPQISVYSGIPD) are interaction with BMI1. The segment covering 265-274 (PAQSRNTAQA) has biased composition (polar residues). The segment covering 337 to 358 (PQPSSKHLQPQFVIQQQPQPQQ) has biased composition (low complexity). The segment covering 379–388 (ASVSPSVALQ) has biased composition (polar residues). Residues 473–483 (KEVAPGEKSVP) show a composition bias toward basic and acidic residues. A compositionally biased stretch (low complexity) spans 537-551 (TSGNGNSASSIAGTA). An HD1 motif is present at residues 558 to 587 (KPPQAIVKPQILTHVIEGFVIQEGAEPFPV). Glycyl lysine isopeptide (Lys-Gly) (interchain with G-Cter in SUMO2) cross-links involve residues K598 and K600. T619 bears the Phosphothreonine mark. Position 621 is a phosphoserine (S621). K632 participates in a covalent cross-link: Glycyl lysine isopeptide (Lys-Gly) (interchain with G-Cter in SUMO2). Residues 633 to 667 (EEGAPLKLKCELCGRVDFAYKFKRSKRFCSMACAK) form an FCS-type zinc finger. 4 residues coordinate Zn(2+): C642, C645, C661, and C665. Disordered stretches follow at residues 688-720 (QKAGAATHNRRRASKASLPPLTKDTKKQPTGTV) and 732-768 (HSQEDSSRCSDNSSYEEPLSPISASSSTSRRRQGQRD). K702 is covalently cross-linked (Glycyl lysine isopeptide (Lys-Gly) (interchain with G-Cter in SUMO2)). A Phosphoserine modification is found at S751. Residues 794–858 (WNVEDVYEFI…YARISMLKDS (65 aa)) form the SAM domain. Residue K847 forms a Glycyl lysine isopeptide (Lys-Gly) (interchain with G-Cter in SUMO2) linkage.

In terms of assembly, component of a PRC1-like complex. Interacts with CBX4. Interacts with BMI1, PCGF2, PHC1 and RNF2. Interacts with CHTOP. Interacts with the N-terminal region of the SP1 transcription factor and with MAPKAPK2. Interacts with SAMD7 and SAMD11.

Its subcellular location is the nucleus. Component of a Polycomb group (PcG) multiprotein PRC1-like complex, a complex class required to maintain the transcriptionally repressive state of many genes, including Hox genes, throughout development. PcG PRC1 complex acts via chromatin remodeling and modification of histones; it mediates monoubiquitination of histone H2A 'Lys-119', rendering chromatin heritably changed in its expressibility. This chain is Polyhomeotic-like protein 2 (PHC2), found in Homo sapiens (Human).